A 29-amino-acid polypeptide reads, in one-letter code: Protein YldA (29 aa).

The helical transmembrane segment at 5 to 25 (FYILIGFLIMAAIIVMAVLYL) threads the bilayer.

It is found in the cell inner membrane. The sequence is that of Protein YldA from Escherichia coli (strain K12).